Here is a 464-residue protein sequence, read N- to C-terminus: Protein FAM90A20 (464 aa).

Disordered stretches follow at residues 16–42, 71–213, 228–247, 254–273, 309–389, and 418–437; these read RAQT…DPRL, ATLG…IPRP, PTHS…ASKT, VRTQ…CPSA, RLGP…HDGA, and EKPG…SEAP. Basic and acidic residues-rich tracts occupy residues 74 to 83 and 97 to 114; these read GKKEGKENLK and NKDK…DPQR. Over residues 180 to 197 the composition is skewed to low complexity; sequence LASLSPLRKASLSSSSSL.

It belongs to the FAM90 family.

In Homo sapiens (Human), this protein is Protein FAM90A20.